The chain runs to 612 residues: MDDHKPIETPDGPAVDTPGIGARRYETPPTELPITEAEAARAAGLAHNEHLKIASGYLRGGLADGLLKHATGAISEDDGQLVKFHGMYMQDDRDIRAERTKKKLEKAYSFMIRLRIAGGVVTPKQWLILDNIATTYAGSALRATTRQTFQYHGVIKSNLKRTMAAIDSALLDTIAACGDVNRNVMAATNPAQAGAHKIALQLAKDISDTLLPKTGAWREIWLDGERVVGGEDAAEVEPVYGKTYLPRKFKTVVAVPPSNEVDIFAHDLGFIAILDKKNRVTGWNVTVGGGMGMTHGEADTFPRTADVLGFVQPEDALKAAEAVMTVQRDWGNRKNRKNARLKYTIERFGLDAFRAEVEKRIGKKLGAPKPFTFDGNGDRYGWVEGDDGRHHLTLYVPSGRIKDIEGGPQFLSGLRRIAEVHEGDFRLTGNQNVIIANVPAGKRAEIDALVDEYGLTRGASALRRNSMACVALPTCGLALAESERYLPDLLSELEESLARHGLQDEPITIRSTGCPNGCARPFISEIGLVGRGPERYHLYLGAAFDGSRLSKLYREDVTASEITGTLDPLFAAYAKDRQPGEHFGDFVIRAGFVAKTSNGPDFHERTGPLRAA.

Residues M1 to E26 form a disordered region. The [4Fe-4S] cluster site is built by C469, C475, C514, and C518. Position 518 (C518) interacts with siroheme.

This sequence belongs to the nitrite and sulfite reductase 4Fe-4S domain family. In terms of assembly, alpha(8)-beta(8). The alpha component is a flavoprotein, the beta component is a hemoprotein. The cofactor is siroheme. [4Fe-4S] cluster is required as a cofactor.

It carries out the reaction hydrogen sulfide + 3 NADP(+) + 3 H2O = sulfite + 3 NADPH + 4 H(+). The protein operates within sulfur metabolism; hydrogen sulfide biosynthesis; hydrogen sulfide from sulfite (NADPH route): step 1/1. Its function is as follows. Component of the sulfite reductase complex that catalyzes the 6-electron reduction of sulfite to sulfide. This is one of several activities required for the biosynthesis of L-cysteine from sulfate. This is Sulfite reductase [NADPH] hemoprotein beta-component from Methylorubrum extorquens (strain CM4 / NCIMB 13688) (Methylobacterium extorquens).